Here is a 233-residue protein sequence, read N- to C-terminus: Bcl-2-like protein 1 (233 aa).

Positions serine 4–tryptophan 24 match the BH4 motif. The segment at aspartate 29–histidine 71 is disordered. At serine 49 the chain carries Phosphoserine; by PLK3. Serine 62 is subject to Phosphoserine; by CDK1. The BH3 signature appears at valine 86–arginine 100. The BH1 signature appears at glutamate 129–glycine 148. The BH2 motif lies at proline 180–tyrosine 195. A helical membrane pass occupies residues phenylalanine 210–leucine 226.

The protein belongs to the Bcl-2 family. As to quaternary structure, homodimer. Heterodimers with BAX, BAK or BCL2. Heterodimerization with BAX does not seem to be required for anti-apoptotic activity. Interacts with BCL2L11. Interacts with BAD. Interacts with SIVA1 isoform 1; the interaction inhibits the anti-apoptotic activity. Interacts with BECN1 and PGAM5. Interacts with IKZF3. Interacts with HEBP2. Interacts with BOP. Interacts with p53/TP53 and BBC3; interaction with BBC3 disrupts the interaction with p53/TP53. Interacts with DNM1L and CLTA; DNM1L and BCL2L1 may form a complex in synaptic vesicles that also contains clathrin and MFF. Interacts with ATP5F1A and ATP5F1B; the interactions mediate the association of BCL2L1 with the mitochondrial membrane ATP synthase F(1)F(0) ATP synthase. Interacts with VDAC1. Interacts (via the loop between motifs BH4 and BH3) with NLRP1 (via LRR repeats), but not with NLRP2, NLRP3, NLRP4, PYCARD, nor MEFV. Interacts with BCL2L11 (via BH3). Interacts with RNF183. Interacts with GIMAP3/IAN4. Interacts with GIMAP5 and HSPA8/HSC70; the interaction between HSPA8 and BCL2L1 is impaired in the absence of GIMAP5. Interacts with CLU (isoform 4); this interaction releases and activates BAX and promotes cell death. In terms of processing, proteolytically cleaved by caspases during apoptosis. The cleaved protein, lacking the BH4 motif, has pro-apoptotic activity. Phosphorylated on Ser-62 by CDK1. This phosphorylation is partial in normal mitotic cells, but complete in G2-arrested cells upon DNA-damage, thus promoting subsequent apoptosis probably by triggering caspases-mediated proteolysis. Phosphorylated by PLK3, leading to regulate the G2 checkpoint and progression to cytokinesis during mitosis. Phosphorylation at Ser-49 appears during the S phase and G2, disappears rapidly in early mitosis during prometaphase, metaphase and early anaphase, and re-appears during telophase and cytokinesis. Post-translationally, ubiquitinated by RNF183 during prolonged ER stress, leading to degradation by the proteosome.

It is found in the mitochondrion membrane. Its subcellular location is the nucleus membrane. It localises to the mitochondrion matrix. The protein localises to the cytoplasm. The protein resides in the cytoskeleton. It is found in the microtubule organizing center. Its subcellular location is the centrosome. It localises to the cytosol. The protein localises to the cytoplasmic vesicle. The protein resides in the secretory vesicle. It is found in the synaptic vesicle membrane. Potent inhibitor of cell death. Inhibits activation of caspases. Appears to regulate cell death by blocking the voltage-dependent anion channel (VDAC) by binding to it and preventing the release of the caspase activator, CYC1, from the mitochondrial membrane. Also acts as a regulator of G2 checkpoint and progression to cytokinesis during mitosis. Regulates presynaptic plasticity, including neurotransmitter release and recovery, number of axonal mitochondria as well as size and number of synaptic vesicle clusters. During synaptic stimulation, increases ATP availability from mitochondria through regulation of mitochondrial membrane ATP synthase F(1)F(0) activity and regulates endocytic vesicle retrieval in hippocampal neurons through association with DMN1L and stimulation of its GTPase activity in synaptic vesicles. May attenuate inflammation impairing NLRP1-inflammasome activation, hence CASP1 activation and IL1B release. This chain is Bcl-2-like protein 1 (BCL2L1), found in Sus scrofa (Pig).